A 179-amino-acid chain; its full sequence is Large ribosomal subunit protein uL5 (179 aa).

Belongs to the universal ribosomal protein uL5 family. Part of the 50S ribosomal subunit; part of the 5S rRNA/L5/L18/L25 subcomplex. Contacts the 5S rRNA and the P site tRNA. Forms a bridge to the 30S subunit in the 70S ribosome.

This is one of the proteins that bind and probably mediate the attachment of the 5S RNA into the large ribosomal subunit, where it forms part of the central protuberance. In the 70S ribosome it contacts protein S13 of the 30S subunit (bridge B1b), connecting the 2 subunits; this bridge is implicated in subunit movement. Contacts the P site tRNA; the 5S rRNA and some of its associated proteins might help stabilize positioning of ribosome-bound tRNAs. This Shewanella woodyi (strain ATCC 51908 / MS32) protein is Large ribosomal subunit protein uL5.